A 460-amino-acid polypeptide reads, in one-letter code: Argininosuccinate lyase (460 aa).

Belongs to the lyase 1 family. Argininosuccinate lyase subfamily.

The protein resides in the cytoplasm. The catalysed reaction is 2-(N(omega)-L-arginino)succinate = fumarate + L-arginine. Its pathway is amino-acid biosynthesis; L-arginine biosynthesis; L-arginine from L-ornithine and carbamoyl phosphate: step 3/3. This Nitratidesulfovibrio vulgaris (strain DSM 19637 / Miyazaki F) (Desulfovibrio vulgaris) protein is Argininosuccinate lyase.